Reading from the N-terminus, the 99-residue chain is NADH-quinone oxidoreductase subunit K (99 aa).

Helical transmembrane passes span 3 to 23, 28 to 48, and 59 to 79; these read PANY…GVLV, IVVF…LVTF, and VMAF…LAII.

It belongs to the complex I subunit 4L family. In terms of assembly, NDH-1 is composed of 14 different subunits. Subunits NuoA, H, J, K, L, M, N constitute the membrane sector of the complex.

It is found in the cell membrane. The catalysed reaction is a quinone + NADH + 5 H(+)(in) = a quinol + NAD(+) + 4 H(+)(out). NDH-1 shuttles electrons from NADH, via FMN and iron-sulfur (Fe-S) centers, to quinones in the respiratory chain. The immediate electron acceptor for the enzyme in this species is believed to be a menaquinone. Couples the redox reaction to proton translocation (for every two electrons transferred, four hydrogen ions are translocated across the cytoplasmic membrane), and thus conserves the redox energy in a proton gradient. In Frankia alni (strain DSM 45986 / CECT 9034 / ACN14a), this protein is NADH-quinone oxidoreductase subunit K.